The chain runs to 379 residues: Mannitol-1-phosphate 5-dehydrogenase (379 aa).

Position 3–14 (3–14) interacts with NAD(+); the sequence is AVHFGAGNIGRG.

The protein belongs to the mannitol dehydrogenase family.

It catalyses the reaction D-mannitol 1-phosphate + NAD(+) = beta-D-fructose 6-phosphate + NADH + H(+). In Anoxybacillus flavithermus (strain DSM 21510 / WK1), this protein is Mannitol-1-phosphate 5-dehydrogenase.